Here is a 145-residue protein sequence, read N- to C-terminus: Transcription antitermination protein NusB (145 aa).

It belongs to the NusB family.

In terms of biological role, involved in transcription antitermination. Required for transcription of ribosomal RNA (rRNA) genes. Binds specifically to the boxA antiterminator sequence of the ribosomal RNA (rrn) operons. The chain is Transcription antitermination protein NusB from Burkholderia ambifaria (strain MC40-6).